Consider the following 103-residue polypeptide: MYAVIKTGGKQYKVVAGEKFKVEQIPADIGSEITLDQVLALGAGETIKFGAPLVEGATVLATVVSHGRHDKVKIFKMRRRKHYQKHQGHRQNYTELQIVSING.

It belongs to the bacterial ribosomal protein bL21 family. As to quaternary structure, part of the 50S ribosomal subunit. Contacts protein L20.

Functionally, this protein binds to 23S rRNA in the presence of protein L20. The sequence is that of Large ribosomal subunit protein bL21 from Herminiimonas arsenicoxydans.